The following is a 149-amino-acid chain: Large ribosomal subunit protein bL9 (149 aa).

The protein belongs to the bacterial ribosomal protein bL9 family.

Functionally, binds to the 23S rRNA. In Endomicrobium trichonymphae, this protein is Large ribosomal subunit protein bL9.